The primary structure comprises 223 residues: Small ribosomal subunit protein uS3 (223 aa).

The KH type-2 domain occupies 39–108 (IRNFVKKNSY…NILINIVEVK (70 aa)).

It belongs to the universal ribosomal protein uS3 family. As to quaternary structure, part of the 30S ribosomal subunit. Forms a tight complex with proteins S10 and S14.

Functionally, binds the lower part of the 30S subunit head. Binds mRNA in the 70S ribosome, positioning it for translation. The sequence is that of Small ribosomal subunit protein uS3 from Clostridium botulinum (strain Kyoto / Type A2).